An 88-amino-acid polypeptide reads, in one-letter code: Alpha-latrotoxin associated low molecular weight protein 2 (88 aa).

Positions 1–19 (MLKLICIVFLVTVLTFVVG) are cleaved as a signal peptide. 3 disulfides stabilise this stretch: Cys-30–Cys-66, Cys-46–Cys-62, and Cys-49–Cys-75.

The protein belongs to the arthropod CHH/MIH/GIH/VIH hormone family. In terms of tissue distribution, expressed by the venom gland.

It is found in the secreted. In terms of biological role, may increase the toxicity of alpha-latrotoxin and/or other venom components. Is non-toxic to mice and to the cockroach Periplaneta americana. This Latrodectus geometricus (Brown widow spider) protein is Alpha-latrotoxin associated low molecular weight protein 2.